A 309-amino-acid polypeptide reads, in one-letter code: tRNA pseudouridine synthase B (309 aa).

The active-site Nucleophile is the D52.

This sequence belongs to the pseudouridine synthase TruB family. Type 1 subfamily.

The enzyme catalyses uridine(55) in tRNA = pseudouridine(55) in tRNA. Functionally, responsible for synthesis of pseudouridine from uracil-55 in the psi GC loop of transfer RNAs. This chain is tRNA pseudouridine synthase B, found in Leptospira interrogans serogroup Icterohaemorrhagiae serovar Lai (strain 56601).